The chain runs to 87 residues: Small ribosomal subunit protein bS20 (87 aa).

Belongs to the bacterial ribosomal protein bS20 family.

Its function is as follows. Binds directly to 16S ribosomal RNA. The protein is Small ribosomal subunit protein bS20 of Shigella flexneri.